Consider the following 921-residue polypeptide: Isoleucine--tRNA ligase 1 (921 aa).

A 'HIGH' region motif is present at residues 57 to 67 (PYANGDIHMGH). Glu552 is an L-isoleucyl-5'-AMP binding site. A 'KMSKS' region motif is present at residues 593-597 (KMSKS). Lys596 contributes to the ATP binding site. Cys888, Cys891, Cys908, and Cys911 together coordinate Zn(2+).

The protein belongs to the class-I aminoacyl-tRNA synthetase family. IleS type 1 subfamily. Monomer. Zn(2+) is required as a cofactor.

It localises to the cytoplasm. The enzyme catalyses tRNA(Ile) + L-isoleucine + ATP = L-isoleucyl-tRNA(Ile) + AMP + diphosphate. Functionally, catalyzes the attachment of isoleucine to tRNA(Ile). As IleRS can inadvertently accommodate and process structurally similar amino acids such as valine, to avoid such errors it has two additional distinct tRNA(Ile)-dependent editing activities. One activity is designated as 'pretransfer' editing and involves the hydrolysis of activated Val-AMP. The other activity is designated 'posttransfer' editing and involves deacylation of mischarged Val-tRNA(Ile). This is Isoleucine--tRNA ligase 1 from Bacillus cereus (strain ZK / E33L).